Here is a 544-residue protein sequence, read N- to C-terminus: Fructose dehydrogenase large subunit (544 aa).

14–30 is a binding site for FAD; the sequence is GAGICGSLLAHKLVRNG. The Proton acceptor role is filled by His-478.

This sequence belongs to the GMC oxidoreductase family. In terms of assembly, heterotrimer composed of FdhL, FdhS and FdhC. The cofactor is FAD.

It localises to the cell membrane. It catalyses the reaction keto-D-fructose + a ubiquinone = 5-dehydro-D-fructose + a ubiquinol. In terms of biological role, catalytic subunit of fructose dehydrogenase, an enzyme that catalyzes the oxidation of D-fructose to produce 5-keto-D-fructose. The sequence is that of Fructose dehydrogenase large subunit (fdhL) from Gluconobacter japonicus.